The following is a 162-amino-acid chain: Solute carrier family 2, facilitated glucose transporter member 4 (162 aa).

The Extracellular segment spans residues 1–13 (TSIFETAGVGQPA). A helical transmembrane segment spans residues 14–34 (YATIGAGVVNTVFTLVSVFLV). N23 provides a ligand contact to D-glucose. The Cytoplasmic portion of the chain corresponds to 35-43 (ERAGRRTLH). Residues 44-64 (LLGLAGMCGCAILMTIALLLL) form a helical membrane-spanning segment. Topologically, residues 65–75 (ERLPAMSYVSI) are extracellular. The helical transmembrane segment at 76 to 96 (VAIFGFVAFFEIGPGPIPWFI) threads the bilayer. D-glucose contacts are provided by E86 and W94. Topologically, residues 97 to 107 (VAELFSQGPRP) are cytoplasmic. Residues 108-128 (AAMAVAGFCNWTSNFIIGMGF) form a helical membrane-spanning segment. The Extracellular segment spans residues 129 to 135 (QYIAXAM). The chain crosses the membrane as a helical span at residues 136–156 (GPYVFLLFAVLLLAFFIFTFL). Residues 157–162 (KVPETR) lie on the Cytoplasmic side of the membrane.

Belongs to the major facilitator superfamily. Sugar transporter (TC 2.A.1.1) family. Glucose transporter subfamily. In terms of assembly, binds to DAXX. Interacts via its N-terminus with SRFBP1. Interacts with NDUFA9. Interacts with TRARG1; the interaction is required for proper SLC2A4 recycling after insulin stimulation. Post-translationally, sumoylated. In terms of processing, palmitoylated. Palmitoylation by ZDHHC7 controls the insulin-dependent translocation of GLUT4 to the plasma membrane.

Its subcellular location is the cell membrane. The protein localises to the endomembrane system. The protein resides in the cytoplasm. It is found in the perinuclear region. The catalysed reaction is D-glucose(out) = D-glucose(in). Insulin-regulated facilitative glucose transporter, which plays a key role in removal of glucose from circulation. Response to insulin is regulated by its intracellular localization: in the absence of insulin, it is efficiently retained intracellularly within storage compartments in muscle and fat cells. Upon insulin stimulation, translocates from these compartments to the cell surface where it transports glucose from the extracellular milieu into the cell. The protein is Solute carrier family 2, facilitated glucose transporter member 4 of Canis lupus familiaris (Dog).